A 197-amino-acid polypeptide reads, in one-letter code: Guanylate kinase (197 aa).

The segment at 1–30 (MAATPRGTSPVPPDARPRLTVLSGPSGVGK) is disordered. In terms of domain architecture, Guanylate kinase-like spans 17-197 (PRLTVLSGPS…RELLALTNVV (181 aa)). Residue 24-31 (GPSGVGKS) coordinates ATP.

Belongs to the guanylate kinase family.

The protein resides in the cytoplasm. It carries out the reaction GMP + ATP = GDP + ADP. Functionally, essential for recycling GMP and indirectly, cGMP. This chain is Guanylate kinase (gmk), found in Streptomyces coelicolor (strain ATCC BAA-471 / A3(2) / M145).